We begin with the raw amino-acid sequence, 453 residues long: 4,4'-diapolycopene-4,4'-dial dehydrogenase (453 aa).

The span at 1-20 (MPDNDSHSLKSLPERQREDL) shows a compositional bias: basic and acidic residues. Positions 1–23 (MPDNDSHSLKSLPERQREDLFSA) are disordered. Residues glutamate 215 and cysteine 249 contribute to the active site.

It belongs to the aldehyde dehydrogenase family.

It catalyses the reaction all-trans-4,4'-diapolycopene-4,4'-dial + 2 A + 2 H2O = all-trans-4,4'-diapolycopene-4,4'-dioate + 2 AH2 + 2 H(+). Its pathway is carotenoid biosynthesis. In terms of biological role, involved in the biosynthesis of the major C30 carotenoid 4,4'-diapolycopene-4,4'-dioic acid, which protects B.firmus from peroxidative reactions. Catalyzes the oxidation of 4,4'-diapolycopene-4,4'-dial to yield 4,4'-diapolycopene-4,4'-dioic aci. This is 4,4'-diapolycopene-4,4'-dial dehydrogenase from Cytobacillus firmus (Bacillus firmus).